A 403-amino-acid chain; its full sequence is DNA polymerase IV (403 aa).

One can recognise a UmuC domain in the interval 23–203 (IAHMDCDAFY…KPVNILPGVG (181 aa)). Aspartate 27 and aspartate 120 together coordinate Mg(2+). Residue glutamate 121 is part of the active site.

It belongs to the DNA polymerase type-Y family. As to quaternary structure, monomer. It depends on Mg(2+) as a cofactor.

It localises to the cytoplasm. It carries out the reaction DNA(n) + a 2'-deoxyribonucleoside 5'-triphosphate = DNA(n+1) + diphosphate. In terms of biological role, poorly processive, error-prone DNA polymerase involved in untargeted mutagenesis. Copies undamaged DNA at stalled replication forks, which arise in vivo from mismatched or misaligned primer ends. These misaligned primers can be extended by PolIV. Exhibits no 3'-5' exonuclease (proofreading) activity. May be involved in translesional synthesis, in conjunction with the beta clamp from PolIII. The protein is DNA polymerase IV of Caulobacter vibrioides (strain ATCC 19089 / CIP 103742 / CB 15) (Caulobacter crescentus).